The primary structure comprises 145 residues: Bacilliredoxin ABC2045 (145 aa).

This sequence belongs to the bacilliredoxin family.

The protein is Bacilliredoxin ABC2045 of Shouchella clausii (strain KSM-K16) (Alkalihalobacillus clausii).